Here is a 261-residue protein sequence, read N- to C-terminus: Major biofilm matrix component (261 aa).

The signal sequence occupies residues 1–27 (MGMKKKLSLGVASAALGLALVGGGTWA). The segment at 241–261 (DHTDKDGYVKENEKAHSEDKN) is disordered.

It belongs to the peptidase M73 family. In terms of assembly, forms fibers. Fibers have variable length and are 10-15 nm width. Interacts with obg (AC P20964) in pull-down experiments.

The protein resides in the secreted. The protein localises to the forespore intermembrane space. Functionally, tasA is the major protein component of the biofilm extracellular matrix. It forms amyloid fibers that bind cells together in the biofilm. Exhibits an antibacterial activity against a variety of Gram-positive and Gram-negative bacteria. In laboratory strains, is also involved in proper spore coat assembly. This chain is Major biofilm matrix component, found in Bacillus subtilis (strain 168).